We begin with the raw amino-acid sequence, 672 residues long: Rho GTPase-activating protein 40 (672 aa).

The tract at residues 43–68 (GCSPGLSTGPTNLQQHPQKPRPADCS) is disordered. Over residues 47 to 59 (GLSTGPTNLQQHP) the composition is skewed to polar residues. Positions 321–519 (VPLHSLLEAD…MMVQYQDLLW (199 aa)) constitute a Rho-GAP domain.

Functionally, GTPase activator for the Rho-type GTPases by converting them to an inactive GDP-bound state. The protein is Rho GTPase-activating protein 40 of Mus musculus (Mouse).